The chain runs to 447 residues: GTPase Era, mitochondrial (447 aa).

The transit peptide at Met1 to Thr18 directs the protein to the mitochondrion. Residues Lys109–Cys340 enclose the Era-type G domain. The segment at Gly117–Ser124 is G1. Gly117–Ser124 lines the GTP pocket. The tract at residues His143–Ser147 is G2. The segment at Asp164 to Gly167 is G3. Residues Asp164–Leu168 and Asn233–Asp236 each bind GTP. The G4 stretch occupies residues Asn233–Asp236. The G5 stretch occupies residues Leu318–Ser320. Residues Leu370–Lys447 form the KH type-2 domain.

Belongs to the TRAFAC class TrmE-Era-EngA-EngB-Septin-like GTPase superfamily. Era GTPase family.

The protein localises to the mitochondrion matrix. It localises to the mitochondrion inner membrane. Its function is as follows. Probable GTPase that plays a role in the mitochondrial ribosomal small subunit assembly. Specifically binds the 12S mitochondrial rRNA (12S mt-rRNA) to a 33 nucleotide section delineating the 3' terminal stem-loop region. May act as a chaperone that protects the 12S mt-rRNA on the 28S mitoribosomal subunit during ribosomal small subunit assembly. This Danio rerio (Zebrafish) protein is GTPase Era, mitochondrial (eral1).